We begin with the raw amino-acid sequence, 340 residues long: Ketol-acid reductoisomerase (NADP(+)) (340 aa).

The KARI N-terminal Rossmann domain occupies 1 to 183 (MAITVYYDKD…GGGRTGIIET (183 aa)). NADP(+) is bound by residues 26–29 (FGSQ), arginine 49, serine 52, serine 54, and 84–87 (DEIQ). Histidine 109 is a catalytic residue. Glycine 135 serves as a coordination point for NADP(+). In terms of domain architecture, KARI C-terminal knotted spans 184 to 329 (TFKAETETDL…RNLRAMMPWI (146 aa)). Mg(2+) contacts are provided by aspartate 192, glutamate 196, glutamate 228, and glutamate 232. Substrate is bound at residue serine 253.

The protein belongs to the ketol-acid reductoisomerase family. Mg(2+) serves as cofactor.

It catalyses the reaction (2R)-2,3-dihydroxy-3-methylbutanoate + NADP(+) = (2S)-2-acetolactate + NADPH + H(+). The enzyme catalyses (2R,3R)-2,3-dihydroxy-3-methylpentanoate + NADP(+) = (S)-2-ethyl-2-hydroxy-3-oxobutanoate + NADPH + H(+). It participates in amino-acid biosynthesis; L-isoleucine biosynthesis; L-isoleucine from 2-oxobutanoate: step 2/4. The protein operates within amino-acid biosynthesis; L-valine biosynthesis; L-valine from pyruvate: step 2/4. Its function is as follows. Involved in the biosynthesis of branched-chain amino acids (BCAA). Catalyzes an alkyl-migration followed by a ketol-acid reduction of (S)-2-acetolactate (S2AL) to yield (R)-2,3-dihydroxy-isovalerate. In the isomerase reaction, S2AL is rearranged via a Mg-dependent methyl migration to produce 3-hydroxy-3-methyl-2-ketobutyrate (HMKB). In the reductase reaction, this 2-ketoacid undergoes a metal-dependent reduction by NADPH to yield (R)-2,3-dihydroxy-isovalerate. The protein is Ketol-acid reductoisomerase (NADP(+)) of Campylobacter jejuni subsp. jejuni serotype O:2 (strain ATCC 700819 / NCTC 11168).